Here is an 807-residue protein sequence, read N- to C-terminus: Glucocorticoid receptor (807 aa).

3 disordered regions span residues 1–47 (MDQG…LPSP), 246–284 (TDVN…QHQQ), and 412–438 (FSVS…SKPS). A modulating region spans residues 1-444 (MDQGGLKRNC…SKPSGPTHKI (444 aa)). Residues 257–282 (LQHHQHQQQQHRHLLQHQQHQLHHQH) are compositionally biased toward basic residues. Over residues 412-421 (FSVSFSSSSP) the composition is skewed to low complexity. NR C4-type zinc fingers lie at residues 445-465 (CLVC…CGSC) and 490-514 (CAGR…FRKC). A DNA-binding region (nuclear receptor) is located at residues 445–519 (CLVCSDEASG…RFRKCLQAGM (75 aa)). A hinge region spans residues 520 to 553 (NLEARKNKKLIKMKVHRPTGSAEPISNMPVPVIP). The 235-residue stretch at 554 to 788 (RMPQLVPTML…FPEMLAEIIT (235 aa)) folds into the NR LBD domain.

It belongs to the nuclear hormone receptor family. NR3 subfamily. In terms of assembly, heteromultimeric cytoplasmic complex with HSP90. Upon ligand binding the complex undergoes a conformation change and moves to the nucleus, where it dissociates. Binds to DNA as a homodimer, and as heterodimer with NR3C2. Interaction with numerous other transcription factors modulates transcription activation.

The protein resides in the cytoplasm. Its subcellular location is the nucleus. It is found in the mitochondrion. It localises to the cytoskeleton. The protein localises to the spindle. The protein resides in the microtubule organizing center. Its subcellular location is the centrosome. Receptor for glucocorticoids (GC). Has a dual mode of action: as a transcription factor that binds to glucocorticoid response elements (GRE), both for nuclear and mitochondrial DNA, and as a modulator of other transcription factors. Affects inflammatory responses, cellular proliferation and differentiation in target tissues. Involved in chromatin remodeling. Plays a role in rapid mRNA degradation by binding to the 5' UTR of target mRNAs and interacting with PNRC2 in a ligand-dependent manner which recruits the RNA helicase UPF1 and the mRNA-decapping enzyme DCP1A, leading to RNA decay. Could act as a coactivator for STAT5-dependent transcription upon growth hormone (GH) stimulation and could reveal an essential role of hepatic GR in the control of body growth. Mediates glucocorticoid-induced apoptosis. Promotes accurate chromosome segregation during mitosis. May act as a tumor suppressor. May play a negative role in adipogenesis through the regulation of lipolytic and antilipogenic gene expression. In Paralichthys olivaceus (Bastard halibut), this protein is Glucocorticoid receptor (nr3c1).